Reading from the N-terminus, the 234-residue chain is Orotidine 5'-phosphate decarboxylase (234 aa).

Residues aspartate 11, lysine 33, 60–69, threonine 120, arginine 181, glutamine 190, glycine 210, and arginine 211 contribute to the substrate site; that span reads DLKFHDIPNT. The active-site Proton donor is the lysine 62.

This sequence belongs to the OMP decarboxylase family. Type 1 subfamily. In terms of assembly, homodimer.

It carries out the reaction orotidine 5'-phosphate + H(+) = UMP + CO2. It functions in the pathway pyrimidine metabolism; UMP biosynthesis via de novo pathway; UMP from orotate: step 2/2. Functionally, catalyzes the decarboxylation of orotidine 5'-monophosphate (OMP) to uridine 5'-monophosphate (UMP). This Aliivibrio fischeri (strain ATCC 700601 / ES114) (Vibrio fischeri) protein is Orotidine 5'-phosphate decarboxylase.